Reading from the N-terminus, the 107-residue chain is Sperm-specific class P protein 34 (107 aa).

A disordered region spans residues 1–26; that stretch reads MINVDPPTGNYPATGGNSTHNITSES. An MSP domain is found at 1 to 107; that stretch reads MINVDPPTGN…GEIIVKLIAA (107 aa). Positions 15–25 are enriched in polar residues; the sequence is GGNSTHNITSE.

In terms of tissue distribution, expressed at higher level in testis.

In Caenorhabditis elegans, this protein is Sperm-specific class P protein 34 (ssp-34).